Consider the following 74-residue polypeptide: NADH dehydrogenase [ubiquinone] 1 alpha subcomplex assembly factor 8 (74 aa).

Residues 22 to 69 (LAACGAEASAYGKCVQASTAPGGRLSKDLCVREFEALRSCFAAAAKKT) enclose the CHCH domain. 2 short sequence motifs (cx9C motif) span residues 25-35 (CGAEASAYGKC) and 51-61 (CVREFEALRSC). 2 disulfides stabilise this stretch: Cys25-Cys61 and Cys35-Cys51.

As to quaternary structure, interacts with NDUFAF5.

The protein localises to the mitochondrion. Functionally, involved in the assembly of mitochondrial NADH:ubiquinone oxidoreductase complex (complex I, MT-ND1). Required to stabilize NDUFAF5. This chain is NADH dehydrogenase [ubiquinone] 1 alpha subcomplex assembly factor 8, found in Mus musculus (Mouse).